Here is a 331-residue protein sequence, read N- to C-terminus: Biotin synthase (331 aa).

One can recognise a Radical SAM core domain in the interval 39–264 (SELQTCYLIS…VFPRSMVRLA (226 aa)). [4Fe-4S] cluster is bound by residues cysteine 54, cysteine 58, and cysteine 61. Residues cysteine 98, cysteine 130, cysteine 190, and arginine 262 each coordinate [2Fe-2S] cluster.

This sequence belongs to the radical SAM superfamily. Biotin synthase family. Homodimer. It depends on [4Fe-4S] cluster as a cofactor. Requires [2Fe-2S] cluster as cofactor.

It carries out the reaction (4R,5S)-dethiobiotin + (sulfur carrier)-SH + 2 reduced [2Fe-2S]-[ferredoxin] + 2 S-adenosyl-L-methionine = (sulfur carrier)-H + biotin + 2 5'-deoxyadenosine + 2 L-methionine + 2 oxidized [2Fe-2S]-[ferredoxin]. It participates in cofactor biosynthesis; biotin biosynthesis; biotin from 7,8-diaminononanoate: step 2/2. Functionally, catalyzes the conversion of dethiobiotin (DTB) to biotin by the insertion of a sulfur atom into dethiobiotin via a radical-based mechanism. This is Biotin synthase from Chlamydia pneumoniae (Chlamydophila pneumoniae).